We begin with the raw amino-acid sequence, 297 residues long: Ribosomal RNA small subunit methyltransferase A (297 aa).

S-adenosyl-L-methionine-binding residues include asparagine 31, leucine 33, glycine 58, glutamate 79, aspartate 104, and asparagine 129.

Belongs to the class I-like SAM-binding methyltransferase superfamily. rRNA adenine N(6)-methyltransferase family. RsmA subfamily.

Its subcellular location is the cytoplasm. It carries out the reaction adenosine(1518)/adenosine(1519) in 16S rRNA + 4 S-adenosyl-L-methionine = N(6)-dimethyladenosine(1518)/N(6)-dimethyladenosine(1519) in 16S rRNA + 4 S-adenosyl-L-homocysteine + 4 H(+). Functionally, specifically dimethylates two adjacent adenosines (A1518 and A1519) in the loop of a conserved hairpin near the 3'-end of 16S rRNA in the 30S particle. May play a critical role in biogenesis of 30S subunits. In Staphylococcus aureus (strain bovine RF122 / ET3-1), this protein is Ribosomal RNA small subunit methyltransferase A.